The following is a 264-amino-acid chain: Phosphatidylglycerol--prolipoprotein diacylglyceryl transferase (264 aa).

The next 7 helical transmembrane spans lie at 14–34 (VGPL…LLFM), 57–77 (LLLY…VLFF), 89–109 (ILAI…VLVA), 127–147 (FIAP…FING), 176–196 (QLYQ…VYSA), 202–222 (KAVS…AEFF), and 235–255 (LGLS…VGLL). R140 provides a ligand contact to a 1,2-diacyl-sn-glycero-3-phospho-(1'-sn-glycerol).

The protein belongs to the Lgt family.

The protein localises to the cell inner membrane. It carries out the reaction L-cysteinyl-[prolipoprotein] + a 1,2-diacyl-sn-glycero-3-phospho-(1'-sn-glycerol) = an S-1,2-diacyl-sn-glyceryl-L-cysteinyl-[prolipoprotein] + sn-glycerol 1-phosphate + H(+). Its pathway is protein modification; lipoprotein biosynthesis (diacylglyceryl transfer). Catalyzes the transfer of the diacylglyceryl group from phosphatidylglycerol to the sulfhydryl group of the N-terminal cysteine of a prolipoprotein, the first step in the formation of mature lipoproteins. In Aromatoleum aromaticum (strain DSM 19018 / LMG 30748 / EbN1) (Azoarcus sp. (strain EbN1)), this protein is Phosphatidylglycerol--prolipoprotein diacylglyceryl transferase.